A 216-amino-acid polypeptide reads, in one-letter code: Thiopurine S-methyltransferase (216 aa).

Tryptophan 11, leucine 46, glutamate 67, and arginine 122 together coordinate S-adenosyl-L-methionine.

It belongs to the class I-like SAM-binding methyltransferase superfamily. TPMT family.

The protein resides in the cytoplasm. It catalyses the reaction S-adenosyl-L-methionine + a thiopurine = S-adenosyl-L-homocysteine + a thiopurine S-methylether.. The protein is Thiopurine S-methyltransferase of Vibrio campbellii (strain ATCC BAA-1116).